The sequence spans 348 residues: Chaperone protein DnaJ (348 aa).

Positions 3-65 (DLYGILGVDH…EQRQRYDRHV (63 aa)) constitute a J domain. Residues 109-191 (GGSQVVKIDS…CYGNGSRSAP (83 aa)) form a CR-type zinc finger. Positions 122, 125, 139, 142, 165, 168, 179, and 182 each coordinate Zn(2+). CXXCXGXG motif repeat units follow at residues 122-129 (CDVCNGTR), 139-146 (CFDCNGSG), 165-172 (CSKCRGNG), and 179-186 (CRRCYGNG).

This sequence belongs to the DnaJ family. As to quaternary structure, homodimer. Zn(2+) serves as cofactor.

Its subcellular location is the cytoplasm. In terms of biological role, participates actively in the response to hyperosmotic and heat shock by preventing the aggregation of stress-denatured proteins and by disaggregating proteins, also in an autonomous, DnaK-independent fashion. Unfolded proteins bind initially to DnaJ; upon interaction with the DnaJ-bound protein, DnaK hydrolyzes its bound ATP, resulting in the formation of a stable complex. GrpE releases ADP from DnaK; ATP binding to DnaK triggers the release of the substrate protein, thus completing the reaction cycle. Several rounds of ATP-dependent interactions between DnaJ, DnaK and GrpE are required for fully efficient folding. Also involved, together with DnaK and GrpE, in the DNA replication of plasmids through activation of initiation proteins. The chain is Chaperone protein DnaJ from Tropheryma whipplei (strain Twist) (Whipple's bacillus).